The following is a 377-amino-acid chain: N-acetyldiaminopimelate deacetylase (377 aa).

Asp69 is a catalytic residue. Catalysis depends on Glu128, which acts as the Proton acceptor.

This sequence belongs to the peptidase M20A family. N-acetyldiaminopimelate deacetylase subfamily.

It carries out the reaction N-acetyl-(2S,6S)-2,6-diaminopimelate + H2O = (2S,6S)-2,6-diaminopimelate + acetate. It functions in the pathway amino-acid biosynthesis; L-lysine biosynthesis via DAP pathway; LL-2,6-diaminopimelate from (S)-tetrahydrodipicolinate (acetylase route): step 3/3. Catalyzes the conversion of N-acetyl-diaminopimelate to diaminopimelate and acetate. This Streptococcus gordonii (strain Challis / ATCC 35105 / BCRC 15272 / CH1 / DL1 / V288) protein is N-acetyldiaminopimelate deacetylase.